The chain runs to 520 residues: FAD-linked oxidoreductase OXR2 (520 aa).

An N-terminal signal peptide occupies residues 1–23; that stretch reads MKSFSLLASAGLATLASLPLTMA. Asparagine 77, asparagine 220, asparagine 378, and asparagine 390 each carry an N-linked (GlcNAc...) asparagine glycan. One can recognise an FAD-binding PCMH-type domain in the interval 79 to 251; sequence SRPTIRLVVV…TSFQSKIYPR (173 aa).

Belongs to the oxygen-dependent FAD-linked oxidoreductase family. It depends on FAD as a cofactor.

It participates in polyketide biosynthesis. FAD-linked oxidoreductase; part of the gene cluster that mediates the biosynthesis of pyriculol and pyriculariol, two heptaketides that induce lesion formation upon application on rice leaves but are dispensable for pathogenicity. The highly reducing polyketide synthase synthesizes the heptaketide backbone of pyriculol and pyriculariol. Pyriculol and pyriculariol contain several hydroxyl moieties and double bonds, so it can be assumed that several reduction steps occur during biosynthesis. These reactions could be executed by PKS19 itself or partly by the tailoring enzymes OXR1, OXR2, RED1, RED2 or RED3, identified within the cluster. The FAD-linked oxidoreductase OXR1 is the only tailoring enzyme for which the function has been determined yet, and is involved in the oxidation of dihydropyriculol and dihydropyriculariol into pyriculol and pyriculariol, respectively. In Pyricularia oryzae (strain 70-15 / ATCC MYA-4617 / FGSC 8958) (Rice blast fungus), this protein is FAD-linked oxidoreductase OXR2.